The following is a 219-amino-acid chain: Thiamine-phosphate synthase (219 aa).

4-amino-2-methyl-5-(diphosphooxymethyl)pyrimidine is bound by residues 44–48 (QFREK) and Asn-79. Positions 80 and 99 each coordinate Mg(2+). Ser-117 is a binding site for 4-amino-2-methyl-5-(diphosphooxymethyl)pyrimidine. A 2-[(2R,5Z)-2-carboxy-4-methylthiazol-5(2H)-ylidene]ethyl phosphate-binding site is contributed by 143-145 (TST). Residue Lys-146 coordinates 4-amino-2-methyl-5-(diphosphooxymethyl)pyrimidine. Residues Gly-175 and 195 to 196 (IS) contribute to the 2-[(2R,5Z)-2-carboxy-4-methylthiazol-5(2H)-ylidene]ethyl phosphate site.

The protein belongs to the thiamine-phosphate synthase family. Mg(2+) serves as cofactor.

The enzyme catalyses 2-[(2R,5Z)-2-carboxy-4-methylthiazol-5(2H)-ylidene]ethyl phosphate + 4-amino-2-methyl-5-(diphosphooxymethyl)pyrimidine + 2 H(+) = thiamine phosphate + CO2 + diphosphate. The catalysed reaction is 2-(2-carboxy-4-methylthiazol-5-yl)ethyl phosphate + 4-amino-2-methyl-5-(diphosphooxymethyl)pyrimidine + 2 H(+) = thiamine phosphate + CO2 + diphosphate. It catalyses the reaction 4-methyl-5-(2-phosphooxyethyl)-thiazole + 4-amino-2-methyl-5-(diphosphooxymethyl)pyrimidine + H(+) = thiamine phosphate + diphosphate. It participates in cofactor biosynthesis; thiamine diphosphate biosynthesis; thiamine phosphate from 4-amino-2-methyl-5-diphosphomethylpyrimidine and 4-methyl-5-(2-phosphoethyl)-thiazole: step 1/1. In terms of biological role, condenses 4-methyl-5-(beta-hydroxyethyl)thiazole monophosphate (THZ-P) and 2-methyl-4-amino-5-hydroxymethyl pyrimidine pyrophosphate (HMP-PP) to form thiamine monophosphate (TMP). This Bacillus thuringiensis (strain Al Hakam) protein is Thiamine-phosphate synthase.